We begin with the raw amino-acid sequence, 133 residues long: ATP synthase epsilon chain (133 aa).

Belongs to the ATPase epsilon chain family. As to quaternary structure, F-type ATPases have 2 components, CF(1) - the catalytic core - and CF(0) - the membrane proton channel. CF(1) has five subunits: alpha(3), beta(3), gamma(1), delta(1), epsilon(1). CF(0) has three main subunits: a, b and c.

It localises to the cell membrane. In terms of biological role, produces ATP from ADP in the presence of a proton gradient across the membrane. This is ATP synthase epsilon chain from Clostridium botulinum (strain Langeland / NCTC 10281 / Type F).